Here is a 430-residue protein sequence, read N- to C-terminus: MKRMKLRTNAGPLQGTIQVPGDKSISHRAVILGAVAKGETRVKGLLKGEDVLSTIQAFRNLGVRIEEKDDQLVIEGQGFQGLNAPCQTLNMGNSGTSMRLIAGLLAGQPFSVKMIGDESLSKRPMDRIVYPLKQMGVEISGETDRQFPPLQLQGNRNLQPITYTLPISSAQVKSAILLAALQAKGTTQVVEKEITRNHTEEMIQQFGGRLIVDGKRITLVGPQQLTAQEITVPGDISSAAFWLVAGLIIPGSELLLKNVGVNPTRTGILEVVEKMGAQIVYEDMNKKEQVTSIRVVYSNMKGTIISGGLIPRLIDELPIIALLATQAQGTTCIKDAQELRVKETDRIQVVTDILNSMGANIKATADGMIIKGPTVLYGANTSTYGDHRIGMMTAIAALLVKQGQVHLDKEEAIMTSYPTFFKDLERLCHD.

3 residues coordinate 3-phosphoshikimate: lysine 23, serine 24, and arginine 28. Lysine 23 is a phosphoenolpyruvate binding site. Positions 95 and 123 each coordinate phosphoenolpyruvate. The 3-phosphoshikimate site is built by serine 169, glutamine 171, aspartate 315, and lysine 342. Phosphoenolpyruvate is bound at residue glutamine 171. The active-site Proton acceptor is aspartate 315. Residues arginine 346 and arginine 388 each contribute to the phosphoenolpyruvate site.

It belongs to the EPSP synthase family. In terms of assembly, monomer.

Its subcellular location is the cytoplasm. It catalyses the reaction 3-phosphoshikimate + phosphoenolpyruvate = 5-O-(1-carboxyvinyl)-3-phosphoshikimate + phosphate. Its pathway is metabolic intermediate biosynthesis; chorismate biosynthesis; chorismate from D-erythrose 4-phosphate and phosphoenolpyruvate: step 6/7. Its function is as follows. Catalyzes the transfer of the enolpyruvyl moiety of phosphoenolpyruvate (PEP) to the 5-hydroxyl of shikimate-3-phosphate (S3P) to produce enolpyruvyl shikimate-3-phosphate and inorganic phosphate. This chain is 3-phosphoshikimate 1-carboxyvinyltransferase, found in Streptococcus pyogenes serotype M1.